A 681-amino-acid chain; its full sequence is MSEPRQILVTSALPYANGSIHLGHMLEYIQTDMWVRFQKLRGNQCIYVCADDAHGSAIMLRAEKEGITPEQLIANVQAEHSSDFADFLVDFDNFHSTHSEENRELSSLIYSRLRDAGHIATRSVTQYFDPEKGMFLADRFIKGTCPKCAAEDQYGDNCEKCGATYAPTELKNPKSAISGATPVLRDSQHFFFKLPDFQAMLQQWTRSGTLQDAVANKLAEWLDSGLQEWDISRDAPYFGFEIPGEPGKYFYVWLDAPIGYMASFKNLCARRPELDFDAFWNKDSKAELYHFIGKDIVNFHALFWPAMLEGAGLRKPTAVNVHGYLTVNGAKMSKSRGTFIKARTYLDHLQPEYLRYYYAAKLGRGVDDLDLNLEDFVQKVNSDLVGKVVNIASRCAGFIHKGNDGVMVAGDAAPELTEAFLAAAPGIAEAYEARDFGRAMREIMALADRANAWIADKAPWSLAKQEGKQDEVQAICAQGINLFRQLMIFLKPVLPVLAADAEAFLNVAPLTWSDHLSRLENHKLNPFKPLMSRIEPARVEAMIAASKEDLLAAEGQAQAPVGNGELAKDPLSAEIEFDTFAAVDLRVALIVKAEAVPGADKLLQLTLDIGDEQRNVFSGIKSAYPDPSRLEGRLTMMVANLKPRKMRFGVSEGMVMAAGPGGEEIYLLSPDSGAKPGQRIK.

The 'HIGH' region motif lies at 14–24 (PYANGSIHLGH). 4 residues coordinate Zn(2+): C145, C148, C158, and C161. Residues 331 to 335 (KMSKS) carry the 'KMSKS' region motif. Position 334 (K334) interacts with ATP. A tRNA-binding domain is found at 579 to 681 (TFAAVDLRVA…SGAKPGQRIK (103 aa)).

The protein belongs to the class-I aminoacyl-tRNA synthetase family. MetG type 1 subfamily. Homodimer. Zn(2+) serves as cofactor.

Its subcellular location is the cytoplasm. It carries out the reaction tRNA(Met) + L-methionine + ATP = L-methionyl-tRNA(Met) + AMP + diphosphate. Functionally, is required not only for elongation of protein synthesis but also for the initiation of all mRNA translation through initiator tRNA(fMet) aminoacylation. This chain is Methionine--tRNA ligase, found in Pseudomonas putida (strain W619).